The sequence spans 1065 residues: Valine--tRNA ligase, mitochondrial (1065 aa).

The N-terminal 15 residues, 1–15 (MPHLPLASFRPPLWG), are a transit peptide targeting the mitochondrion. The tract at residues 27 to 52 (ALCTQPEPHGSPVSRRNREAKQKRLR) is disordered. A compositionally biased stretch (basic and acidic residues) spans 42 to 52 (RNREAKQKRLR). Positions 146–156 (PNVTGSLHIGH) match the 'HIGH' region motif. The 'KMSKS' region signature appears at 659-663 (KMSKS). K662 contacts ATP.

The protein belongs to the class-I aminoacyl-tRNA synthetase family.

The protein localises to the mitochondrion. It carries out the reaction tRNA(Val) + L-valine + ATP = L-valyl-tRNA(Val) + AMP + diphosphate. Functionally, catalyzes the attachment of valine to tRNA(Val) in a two-step reaction: valine is first activated by ATP to form Val-AMP and then transferred to the acceptor end of tRNA(Val). In Rattus norvegicus (Rat), this protein is Valine--tRNA ligase, mitochondrial (Vars2).